The sequence spans 443 residues: ATP-dependent protease ATPase subunit HslU (443 aa).

Residues I18, 60 to 65 (GVGKTE), D256, E321, and R393 contribute to the ATP site.

This sequence belongs to the ClpX chaperone family. HslU subfamily. In terms of assembly, a double ring-shaped homohexamer of HslV is capped on each side by a ring-shaped HslU homohexamer. The assembly of the HslU/HslV complex is dependent on binding of ATP.

It is found in the cytoplasm. In terms of biological role, ATPase subunit of a proteasome-like degradation complex; this subunit has chaperone activity. The binding of ATP and its subsequent hydrolysis by HslU are essential for unfolding of protein substrates subsequently hydrolyzed by HslV. HslU recognizes the N-terminal part of its protein substrates and unfolds these before they are guided to HslV for hydrolysis. This Shigella dysenteriae serotype 1 (strain Sd197) protein is ATP-dependent protease ATPase subunit HslU.